The primary structure comprises 191 residues: Dephospho-CoA kinase (191 aa).

One can recognise a DPCK domain in the interval 3–191; it reads AIGITGSYAS…KLIKDLECRV (189 aa). An ATP-binding site is contributed by 11–16; sequence ASGKTF.

Belongs to the CoaE family.

The protein localises to the cytoplasm. It catalyses the reaction 3'-dephospho-CoA + ATP = ADP + CoA + H(+). The protein operates within cofactor biosynthesis; coenzyme A biosynthesis; CoA from (R)-pantothenate: step 5/5. Catalyzes the phosphorylation of the 3'-hydroxyl group of dephosphocoenzyme A to form coenzyme A. The chain is Dephospho-CoA kinase from Rickettsia prowazekii (strain Madrid E).